Consider the following 559-residue polypeptide: CTP synthase (559 aa).

Positions 1-270 (MTKFVFVTGG…DGLICDKLRI (270 aa)) are amidoligase domain. Ser-13 provides a ligand contact to CTP. Residue Ser-13 participates in UTP binding. ATP contacts are provided by residues 14 to 19 (SLGKGI) and Asp-71. Mg(2+) is bound by residues Asp-71 and Glu-144. CTP-binding positions include 151–153 (DIE), 191–196 (KTKPTQ), and Lys-227. UTP is bound by residues 191-196 (KTKPTQ) and Lys-227. The Glutamine amidotransferase type-1 domain maps to 295 to 547 (SIAMVGKYVD…IKAALDHKAR (253 aa)). Gly-356 contributes to the L-glutamine binding site. Residue Cys-383 is the Nucleophile; for glutamine hydrolysis of the active site. Residues 384–387 (LGMQ), Glu-407, and Arg-473 each bind L-glutamine. Residues His-520 and Glu-522 contribute to the active site.

It belongs to the CTP synthase family. Homotetramer.

The enzyme catalyses UTP + L-glutamine + ATP + H2O = CTP + L-glutamate + ADP + phosphate + 2 H(+). The catalysed reaction is L-glutamine + H2O = L-glutamate + NH4(+). It carries out the reaction UTP + NH4(+) + ATP = CTP + ADP + phosphate + 2 H(+). Its pathway is pyrimidine metabolism; CTP biosynthesis via de novo pathway; CTP from UDP: step 2/2. Its activity is regulated as follows. Allosterically activated by GTP, when glutamine is the substrate; GTP has no effect on the reaction when ammonia is the substrate. The allosteric effector GTP functions by stabilizing the protein conformation that binds the tetrahedral intermediate(s) formed during glutamine hydrolysis. Inhibited by the product CTP, via allosteric rather than competitive inhibition. Its function is as follows. Catalyzes the ATP-dependent amination of UTP to CTP with either L-glutamine or ammonia as the source of nitrogen. Regulates intracellular CTP levels through interactions with the four ribonucleotide triphosphates. This chain is CTP synthase, found in Variovorax paradoxus (strain S110).